A 433-amino-acid polypeptide reads, in one-letter code: uncharacterized protein (433 aa).

It is found in the virion. This is an uncharacterized protein from Acanthamoeba polyphaga (Amoeba).